Consider the following 132-residue polypeptide: Small ribosomal subunit protein uS8 (132 aa).

The protein belongs to the universal ribosomal protein uS8 family. As to quaternary structure, part of the 30S ribosomal subunit. Contacts proteins S5 and S12.

One of the primary rRNA binding proteins, it binds directly to 16S rRNA central domain where it helps coordinate assembly of the platform of the 30S subunit. The polypeptide is Small ribosomal subunit protein uS8 (Lactobacillus helveticus (strain DPC 4571)).